The following is a 168-amino-acid chain: Peroxynitrite isomerase (168 aa).

The GXWXGXG signature appears at 25 to 31 (GTWRGAG). A heme b-binding site is contributed by histidine 160.

The protein belongs to the nitrobindin family. As to quaternary structure, homodimer. The cofactor is heme b.

The enzyme catalyses peroxynitrite = nitrate. Its pathway is nitrogen metabolism. Heme-binding protein able to scavenge peroxynitrite and to protect free L-tyrosine against peroxynitrite-mediated nitration, by acting as a peroxynitrite isomerase that converts peroxynitrite to nitrate. Therefore, this protein likely plays a role in peroxynitrite sensing and in the detoxification of reactive nitrogen and oxygen species (RNS and ROS, respectively). Is able to bind nitric oxide (NO) in vitro, but may act as a sensor of peroxynitrite levels in vivo. In Nocardia farcinica (strain IFM 10152), this protein is Peroxynitrite isomerase.